Consider the following 187-residue polypeptide: Protein Flattop (187 aa).

The interval 97-187 is disordered; sequence THSGHGIHTH…TPQLEREEPQ (91 aa). The span at 122–131 shows a compositional bias: polar residues; sequence EGDQTCNAPT. A compositionally biased stretch (basic and acidic residues) spans 169–187; sequence KRREQSLEETPQLEREEPQ.

This sequence belongs to the Flattop family.

It localises to the cytoplasm. Its subcellular location is the cytoskeleton. The protein localises to the cilium basal body. The protein resides in the cell projection. It is found in the cilium. It localises to the apical cell membrane. Its subcellular location is the cilium axoneme. Microtubule inner protein (MIP) part of the dynein-decorated doublet microtubules (DMTs) in cilia axoneme. Acts as a regulator of cilium basal body docking and positioning in mono- and multiciliated cells. Regulates basal body docking and cilia formation in multiciliated lung cells. Regulates kinocilium positioning and stereocilia bundle morphogenesis in the inner ear. The sequence is that of Protein Flattop from Salmo salar (Atlantic salmon).